Here is a 1214-residue protein sequence, read N- to C-terminus: Reverse gyrase (1214 aa).

The segment at 1–37 (MKAIYRDMCPNCRGAITDERLAAKNPCDACLDEPISM) adopts an RG N-terminal-type zinc-finger fold. The Zn(2+) site is built by C9, C12, C27, and C30. ATP is bound by residues Q89 and 106-113 (APTGMGKS). The region spanning 93 to 252 (VKRIIKGKSF…WEIIKLKKQL (160 aa)) is the Helicase ATP-binding domain. Positions 213–216 (DDVD) match the DEAD box motif. The tract at residues 635 to 1214 (DLVKSALMIV…YEEILRYVKS (580 aa)) is topoisomerase I. Residues 639-802 (SALMIVESPN…VIKRIEFHEV (164 aa)) enclose the Toprim domain. E645 is a binding site for Mg(2+). Residues 719 to 748 (IKRCRDCGHQFVDWEEKGVCPRCGSRNVYD) form an RG C-terminal-type zinc finger. Residues C722, C725, C738, and C741 each contribute to the Zn(2+) site. Position 771 (D771) interacts with Mg(2+). In terms of domain architecture, Topo IA-type catalytic spans 818-1212 (NEDRVNAQLV…ELYEEILRYV (395 aa)). Y955 (O-(5'-phospho-DNA)-tyrosine intermediate) is an active-site residue.

It in the N-terminal section; belongs to the DEAD box helicase family. DDVD subfamily. The protein in the C-terminal section; belongs to the type IA topoisomerase family. Monomer. Requires Zn(2+) as cofactor. The cofactor is Mg(2+).

It is found in the cytoplasm. It carries out the reaction ATP + H2O = ADP + phosphate + H(+). Modifies the topological state of DNA by introducing positive supercoils in an ATP-dependent process. Increases the linking number in steps of +1. Binds to single-stranded DNA, transiently cleaves and then rejoins the ends, introducing a positive supercoil in the process. The scissile phosphodiester is attacked by the catalytic tyrosine of the enzyme, resulting in the formation of a DNA-(5'-phosphotyrosyl)-enzyme intermediate. Probably involved in rewinding DNA strands in regions of the chromosome that have opened up to allow replication, transcription, DNA repair and/or for DNA protection. This is Reverse gyrase from Pyrococcus furiosus (strain ATCC 43587 / DSM 3638 / JCM 8422 / Vc1).